A 308-amino-acid chain; its full sequence is Adipolin (308 aa).

Residues 1 to 21 (MWAWGWAAAALLWLQTAGAGA) form the signal peptide. The disordered stretch occupies residues 36–119 (DSPNITTSNR…PPGSPGVGVT (84 aa)). N-linked (GlcNAc...) asparagine glycosylation is present at asparagine 39. Residues 82–93 (RKRCRGRDKKSR) are compositionally biased toward basic residues. Residues 99 to 113 (PGPPGPPGPPGPPGS) are compositionally biased toward pro residues. The C1q domain maps to 153 to 308 (QRLVVEAFYC…SSFSGMLLGT (156 aa)).

This sequence belongs to the adipolin/erythroferrone family. As to quaternary structure, homomultimer; disulfide-linked. Adipolin fC1QTNF12: homotrimer; disulfide-linked. Adipolin gC1QTNF12: homodimer; disulfide-linked. May interact with ERFE. Post-translationally, processed into Adipolin fC1QTNF12 and Adipolin gC1QTNF12 by FURIN. Insulin enhances endogenous C1QTNF12 cleavage. Widely expressed, with high expression in subcutaneous and epididymal white adipose tissues and brown adipose tissue. Expressed in adipocytes (at protein level).

It is found in the secreted. Insulin-sensitizing adipocyte-secreted protein (adipokine) that regulates glucose metabolism in liver and adipose tissue. Promotes glucose uptake in adipocytes and suppresses de novo glucose production in hepatocytes via the PI3K-Akt signaling pathway. Administration lead to reduction of blood glucose. Able to attenuate inflammation in fat tissue. Functionally, acts by activating the Akt signaling in hepatocytes and adipocytes. Not able to increase insulin-stimulated glucose uptake in adipocytes. Its function is as follows. Acts by activating the MAP kinase. Increases insulin-stimulated glucose uptake in adipocytes. This Mus musculus (Mouse) protein is Adipolin (C1qtnf12).